The primary structure comprises 292 residues: 4-diphosphocytidyl-2-C-methyl-D-erythritol kinase (292 aa).

The active site involves lysine 10. 94-104 (PVAAGLAGGSS) contacts ATP. Aspartate 136 is a catalytic residue.

This sequence belongs to the GHMP kinase family. IspE subfamily.

It carries out the reaction 4-CDP-2-C-methyl-D-erythritol + ATP = 4-CDP-2-C-methyl-D-erythritol 2-phosphate + ADP + H(+). It participates in isoprenoid biosynthesis; isopentenyl diphosphate biosynthesis via DXP pathway; isopentenyl diphosphate from 1-deoxy-D-xylulose 5-phosphate: step 3/6. Functionally, catalyzes the phosphorylation of the position 2 hydroxy group of 4-diphosphocytidyl-2C-methyl-D-erythritol. This chain is 4-diphosphocytidyl-2-C-methyl-D-erythritol kinase, found in Brevibacillus brevis (strain 47 / JCM 6285 / NBRC 100599).